Reading from the N-terminus, the 303-residue chain is Energy-coupling factor transporter ATP-binding protein EcfA2 (303 aa).

The ABC transporter domain occupies 17 to 260 (LSVSNLSCFF…EAFLAHTTII (244 aa)). 54–61 (GDSGSGKS) is an ATP binding site.

Belongs to the ABC transporter superfamily. Energy-coupling factor EcfA family. In terms of assembly, forms a stable energy-coupling factor (ECF) transporter complex composed of 2 membrane-embedded substrate-binding proteins (S component), 2 ATP-binding proteins (A component) and 2 transmembrane proteins (T component).

It localises to the cell membrane. Its function is as follows. ATP-binding (A) component of a common energy-coupling factor (ECF) ABC-transporter complex. Unlike classic ABC transporters this ECF transporter provides the energy necessary to transport a number of different substrates. This chain is Energy-coupling factor transporter ATP-binding protein EcfA2, found in Mycoplasma pneumoniae (strain ATCC 29342 / M129 / Subtype 1) (Mycoplasmoides pneumoniae).